The sequence spans 577 residues: ATP-dependent zinc metalloprotease FtsH (577 aa).

Residues 1–3 (MKK) lie on the Cytoplasmic side of the membrane. The helical transmembrane segment at 4–24 (LYWIILIAVVLACSGILMSLH) threads the bilayer. The Extracellular segment spans residues 25-98 (LSVTKEEMTY…IKVDNSDSYS (74 aa)). The helical transmembrane segment at 99–119 (ATKVIQIILIITVGTGVFLFI) threads the bilayer. The Cytoplasmic portion of the chain corresponds to 120 to 577 (RTSGGKDKPL…IDRICLKEAV (458 aa)). 186–193 (GPPGTGKT) serves as a coordination point for ATP. Residue H409 coordinates Zn(2+). E410 is a catalytic residue. Residues H413 and D487 each coordinate Zn(2+).

This sequence in the central section; belongs to the AAA ATPase family. It in the C-terminal section; belongs to the peptidase M41 family. Homohexamer. Requires Zn(2+) as cofactor.

The protein localises to the cell membrane. Its function is as follows. Acts as a processive, ATP-dependent zinc metallopeptidase for both cytoplasmic and membrane proteins. Plays a role in the quality control of integral membrane proteins. In Lachnoclostridium phytofermentans (strain ATCC 700394 / DSM 18823 / ISDg) (Clostridium phytofermentans), this protein is ATP-dependent zinc metalloprotease FtsH.